We begin with the raw amino-acid sequence, 1162 residues long: DNA-directed RNA polymerase subunit beta 1 (1162 aa).

The protein belongs to the RNA polymerase beta chain family. The RNAP catalytic core consists of 2 alpha, 1 beta, 1 beta' and 1 omega subunit. When a sigma factor is associated with the core the holoenzyme is formed, which can initiate transcription.

It catalyses the reaction RNA(n) + a ribonucleoside 5'-triphosphate = RNA(n+1) + diphosphate. Functionally, DNA-dependent RNA polymerase catalyzes the transcription of DNA into RNA using the four ribonucleoside triphosphates as substrates. The sequence is that of DNA-directed RNA polymerase subunit beta 1 from Nocardia farcinica (strain IFM 10152).